Reading from the N-terminus, the 317-residue chain is Sulfate adenylyltransferase subunit 2 (317 aa).

Disordered stretches follow at residues 1-21 (MPDS…APLD) and 298-317 (RAID…EGYF).

The protein belongs to the PAPS reductase family. CysD subfamily. As to quaternary structure, heterodimer composed of CysD, the smaller subunit, and CysN.

It catalyses the reaction sulfate + ATP + H(+) = adenosine 5'-phosphosulfate + diphosphate. Its pathway is sulfur metabolism; hydrogen sulfide biosynthesis; sulfite from sulfate: step 1/3. Functionally, with CysN forms the ATP sulfurylase (ATPS) that catalyzes the adenylation of sulfate producing adenosine 5'-phosphosulfate (APS) and diphosphate, the first enzymatic step in sulfur assimilation pathway. APS synthesis involves the formation of a high-energy phosphoric-sulfuric acid anhydride bond driven by GTP hydrolysis by CysN coupled to ATP hydrolysis by CysD. This chain is Sulfate adenylyltransferase subunit 2, found in Rhizobium etli (strain ATCC 51251 / DSM 11541 / JCM 21823 / NBRC 15573 / CFN 42).